The following is a 539-amino-acid chain: Chitin deacetylase 1 (539 aa).

Residues 1–23 (MARYARVATLAACLLFACALADG) form the signal peptide. The region spanning 42–104 (QELCKDKDAG…WKDAVKNCKL (63 aa)) is the Chitin-binding type-2 domain. Disulfide bonds link Cys80–Cys93, Cys122–Cys134, Cys129–Cys147, Cys141–Cys156, Cys168–Cys180, and Cys173–Cys178. Residues 121–157 (LCQDGFLACGDSTCIERGLFCNGEKDCGDGSDENSCD) form the LDL-receptor class A domain. Asp206 serves as a coordination point for Zn(2+). 5 disulfide bridges follow: Cys230-Cys489, Cys354-Cys361, Cys391-Cys397, Cys497-Cys520, and Cys503-Cys523. Asn244 carries an N-linked (GlcNAc...) asparagine glycan. Zn(2+) contacts are provided by His261 and His265. A glycan (N-linked (GlcNAc...) asparagine) is linked at Asn296.

The protein belongs to the carbohydrate esterase 4 (CE4) family. Interacts with CPAP3-A1. Zn(2+) serves as cofactor. Highly expressed in epidermis and head. Moderate expression levels in fat body, Malpighian tubule, testis and midgut. Low expression in silk gland and ovary.

It localises to the secreted. It catalyses the reaction [(1-&gt;4)-N-acetyl-beta-D-glucosaminyl](n) + n H2O = chitosan + n acetate. Its activity is regulated as follows. Binding to the accessory protein CPAP3-A1 is essential for chitinase activity. In terms of biological role, hydrolyzes the N-acetamido groups of N-acetyl-D-glucosamine residues in chitin. This Bombyx mori (Silk moth) protein is Chitin deacetylase 1.